The primary structure comprises 1583 residues: MIPHSSAGVQQWGHHPLHALNPGAGRTDTASALGPSDLQLEKAPMSAPQPQLRQPAVVDLTTHSGDTSEREPPSKRLRLDLPSVASTGDASPASGNGEPRNTPSTSTPTAKPSSLSWRGRPVWSFQALISEIPGSGGMSEEDAAAVAQSGKPASPPPFPVLPWKYAPPEAAGNKSVKSRDSSPAKKVQTTPYHIECPSVAPVLKGQKVADFSPWTGNHPEDVLNEQTAKQGHYDRTQVSQNESNTARPSLYAQLKHRSGLQMLSSVFAAALEKRQSHNLVNAPSTFKPPPRVTLTDNKREAWLRDLANPSVPLRRLSRTIPHGIRGKALLDQCLSKWIPVNRAVWLAKCVGANEIRAFKRKGTSGAVVIGLEAKWVREWTAHVQQFLEGLVAACGTADWKMKMTYAVGLTARLFFERLLDDEQYLGWFLSSLEAASLNTVPVWLLMLGIYWDSIMRYRKRGRRLAEALLEKLRQVTNPEHATTLRPLVDRLSLHIRTLVVEHTSSVILPNSWAKYKDLVLSCLNMKDNTHKAIFQNVAERNARIQLSKDRQDSGQRSPQQRVIHLFDAVCSTHDVASAAAACLKTIDDKSLLVTKLLEWTATPFRCGLCRVYTAVRLLRKWKMSGVDIDTYILSFLTRTGNRASLTMDNIYHVISELVRSQTFSVGRYLQWLMAKGVSSSNQSDHSIDLYLLKQLPMTRLPDHVRNLRNTLLYRAGVPATLEDSTIAELKASIAGRLPNIFGNEVEHTMVVESPSLDLTWAVKSEIGQWLRRGISGHCRNATSAMAGITVPADRNVSRLTPDEFYHIRDVLESFGDLSMLADVVKQTTSCDDNIVLASAADTVNYHFDSFCVIGATSDLFRSLVESYARLKRLGTPNLDLVFSLIELGLRLPQECNTVALLRQDLLRIESKSALAAPSPLSDNPSTAINEADPSFRSKLDQLLSSGGGMDESTMASIFASLTNILTGRNEDVKLSANETCRYLAYLRPFHPKHFDAMLVRWVCGLLKSSARSTMPHILPPLIGVGCVTIHAFVFLVKKLLQSERIASKIPNPARLKMDILDLLVPPAPGQSRYFDLVTYRFHLAQQEFLLKYYKETLDIICDALSTNAAAAGINSELRSSATTLLRLLLAQEPEDVVQYCLQKISAQHSTFTSVLQDTLDQLLQSVSLHDPQVSMAENVIRTTDDFSLPFCQLKLQVLSNAESKENMGDGIVDVMFKAAVADTRAKGSNWIGLVRLMSPNSVQQIRERAEKEFFAVPLFAETLGDQSLSYAPNTEALETAKLYLTIIDKLAYSIPEAGVQSVGPILVEKMDLLLHKLVVMQTSLVTRQGVVSDQATQSRANFERALAFWFSALLRMIVIHRTAFNVPSSVPRATVVQDQSRLLVSIFCISLARLPTNILRLYPTADYFPHPISSEGYRPCPGILLQTHALDVAASLIDTFPDESRQQCARFLKDKCPPFLQFQNDNRFSYLLGPVPDAGTSNIPPPASVPSPAAAAASTPTPTPSSGLPPGSSTQQASSTLSGIPTGVSEDCVASRLRLQYRGRTIGPYPVRPWELLEDAAPIVGVNDTAVNLKFFDARRVRA.

Disordered stretches follow at residues 1 to 117 (MIPH…SLSW) and 1481 to 1525 (SNIP…SGIP). Positions 66–79 (DTSEREPPSKRLRL) are enriched in basic and acidic residues. Composition is skewed to low complexity over residues 102-114 (TPST…KPSS) and 1490-1514 (PSPA…GSST).

The protein belongs to the Mediator complex subunit 12 family. In terms of assembly, component of the srb8-11 complex, which itself associates with the Mediator complex.

The protein resides in the nucleus. Component of the srb8-11 complex. The srb8-11 complex is a regulatory module of the Mediator complex which is itself involved in regulation of basal and activated RNA polymerase II-dependent transcription. The srb8-11 complex may be involved in the transcriptional repression of a subset of genes regulated by Mediator. It may inhibit the association of the Mediator complex with RNA polymerase II to form the holoenzyme complex. The sequence is that of Mediator of RNA polymerase II transcription subunit 12 (srb8) from Aspergillus terreus (strain NIH 2624 / FGSC A1156).